Here is a 515-residue protein sequence, read N- to C-terminus: WUSCHEL-related homeobox 12 (515 aa).

Polar residues-rich tracts occupy residues 23–32 (QQQPDMNGNG) and 44–57 (TAATTGNGKPSLLS). Disordered regions lie at residues 23 to 76 (QQQP…WNPR), 130 to 156 (NKLRAAGHHHHHGRAAALPRASAPPST), and 176 to 195 (LLAATSSSSSSSDRSSGSSK). A compositionally biased stretch (basic and acidic residues) spans 62–71 (EGTRNPEPKP). A DNA-binding region (homeobox; WUS-type) is located at residues 68 to 132 (EPKPRWNPRP…NRKSRTKNKL (65 aa)). The segment covering 130-143 (NKLRAAGHHHHHGR) has biased composition (basic residues). Composition is skewed to low complexity over residues 144–156 (AAALPRASAPPST) and 177–195 (LAATSSSSSSSDRSSGSSK).

The protein belongs to the WUS homeobox family.

It is found in the nucleus. Transcription factor which may be involved in developmental processes. The protein is WUSCHEL-related homeobox 12 (WOX12) of Oryza sativa subsp. japonica (Rice).